A 348-amino-acid chain; its full sequence is Anthranilate phosphoribosyltransferase (348 aa).

5-phospho-alpha-D-ribose 1-diphosphate contacts are provided by residues G83, G86–D87, T91, N93–T96, K111–S119, and T123. G83 is a binding site for anthranilate. Mg(2+) is bound at residue S95. N114 provides a ligand contact to anthranilate. Residue R169 coordinates anthranilate. Positions 227 and 228 each coordinate Mg(2+).

It belongs to the anthranilate phosphoribosyltransferase family. In terms of assembly, homodimer. The cofactor is Mg(2+).

It catalyses the reaction N-(5-phospho-beta-D-ribosyl)anthranilate + diphosphate = 5-phospho-alpha-D-ribose 1-diphosphate + anthranilate. Its pathway is amino-acid biosynthesis; L-tryptophan biosynthesis; L-tryptophan from chorismate: step 2/5. Functionally, catalyzes the transfer of the phosphoribosyl group of 5-phosphorylribose-1-pyrophosphate (PRPP) to anthranilate to yield N-(5'-phosphoribosyl)-anthranilate (PRA). In Thermobifida fusca (strain YX), this protein is Anthranilate phosphoribosyltransferase.